We begin with the raw amino-acid sequence, 2319 residues long: A-kinase anchor protein 6 (2319 aa).

Polar residues-rich tracts occupy residues 1 to 12 and 324 to 339; these read MLTMSVTLSPLR and GVSSSSGEALTNAAQP. Disordered regions lie at residues 1-24, 301-369, 493-532, 566-614, and 691-757; these read MLTMSVTLSPLRSQDLDPMATDAS, VDDK…NATP, SRLKKPHKTSEEVPPCRTPKRGTGSGKQAKNTKSSAVPNG, LQLQ…PSHV, and TRLG…SATK. Residues 340–351 show a composition bias toward low complexity; that stretch reads SSETVQQESSSS. Polar residues-rich tracts occupy residues 518-532 and 566-591; these read GKQAKNTKSSAVPNG and LQLQSETSSSPAFTQSSESSVGSDNI. Low complexity predominate over residues 697 to 711; that stretch reads SPSSSSDIASSLGES. Residues 735–754 are compositionally biased toward basic and acidic residues; that stretch reads KYADEKSERASSSEKNESHS. Spectrin repeat units lie at residues 762-848 and 1036-1150; these read QKLM…QLLE and EKVD…LLDD. Residue Ser1073 is modified to Phosphoserine. Residues 1250 to 1272 are disordered; the sequence is KLGETSNEDPGYDEEADNHGGSQ. Residues 1255–1265 are compositionally biased toward acidic residues; sequence SNEDPGYDEEA. Residues Ser1570 and Ser1595 each carry the phosphoserine modification. 3 disordered regions span residues 1821–1842, 1900–1925, and 1963–1983; these read VSDEMKGSKDISSSEMTNPSDT, EGIPERQKGKPNVTSKVSENLGSHGK, and KCPNHHHFENQSTASTPTEKS. Polar residues-rich tracts occupy residues 1830-1842, 1911-1920, and 1972-1982; these read DISSSEMTNPSDT, NVTSKVSENL, and NQSTASTPTEK. Residues 2063-2076 form a PKA-RII subunit binding domain region; sequence IIDMASTALKSKSQ. Residues 2198–2215 show a composition bias toward low complexity; that stretch reads FSDSSLSADDADTVALSS. Positions 2198-2319 are disordered; it reads FSDSSLSADD…HEKRHRNMHR (122 aa).

As to quaternary structure, interacts with RII subunit of PKA, phosphatase 2B (calcineurin) and AKAP79. Interacts with SYNPO2. As to expression, highly expressed in cardiac and skeletal muscle, followed by brain.

It localises to the sarcoplasmic reticulum. It is found in the nucleus membrane. In terms of biological role, binds to type II regulatory subunits of protein kinase A and anchors/targets them to the nuclear membrane or sarcoplasmic reticulum. May act as an adapter for assembling multiprotein complexes. In Homo sapiens (Human), this protein is A-kinase anchor protein 6 (AKAP6).